The chain runs to 489 residues: Aklavinone 12-hydroxylase DnrF (489 aa).

Residues 17 to 18 (LG), glutamate 37, glutamine 121, and leucine 145 contribute to the FAD site. The active-site Proton acceptor is tyrosine 224. Residue aspartate 308 participates in FAD binding. Glycine 317 contacts aklavinone. Residues 402-428 (VAAEDDDPEPTEDPRRPSGRPGFRAPH) form a disordered region.

This sequence belongs to the PheA/TfdB FAD monooxygenase family. Monomer. The cofactor is FAD.

It carries out the reaction aklavinone + NADPH + O2 + H(+) = epsilon-rhodomycinone + NADP(+) + H2O. Its pathway is antibiotic biosynthesis; daunorubicin biosynthesis. The protein operates within antibiotic biosynthesis; carminomycin biosynthesis. It participates in antibiotic biosynthesis; rhodomycin biosynthesis. It functions in the pathway antibiotic biosynthesis; doxorubicin biosynthesis. Its function is as follows. Involved in the biosynthesis of the anthracyclines carminomycin, rhodomycin, daunorubicin (daunomycin) and doxorubicin (adriamycin) which are aromatic polyketide antibiotics that exhibit high cytotoxicity and are widely applied in the chemotherapy of a variety of cancers. Catalyzes the incorporation of a hydroxyl group at position C-11 of aklavinone, resulting in epsilon-rhodomycinone. The polypeptide is Aklavinone 12-hydroxylase DnrF (dnrF) (Streptomyces peucetius subsp. caesius).